Reading from the N-terminus, the 516-residue chain is Glucose-1-phosphate adenylyltransferase large subunit 1, chloroplastic/amyloplastic (516 aa).

The N-terminal 45 residues, methionine 1–cysteine 45, are a transit peptide targeting the chloroplast.

It belongs to the bacterial/plant glucose-1-phosphate adenylyltransferase family. As to quaternary structure, heterotetramer. As to expression, endosperm.

The protein localises to the plastid. It localises to the chloroplast. It is found in the amyloplast. The enzyme catalyses alpha-D-glucose 1-phosphate + ATP + H(+) = ADP-alpha-D-glucose + diphosphate. The protein operates within glycan biosynthesis; starch biosynthesis. With respect to regulation, activated by 3'phosphoglycerate, inhibited by orthophosphate. Allosteric regulation. In terms of biological role, this protein plays a role in synthesis of starch. It catalyzes the synthesis of the activated glycosyl donor, ADP-glucose from Glc-1-P and ATP. The protein is Glucose-1-phosphate adenylyltransferase large subunit 1, chloroplastic/amyloplastic (SH2) of Zea mays (Maize).